Reading from the N-terminus, the 136-residue chain is UPF0225 protein Pnap_0466 (136 aa).

This sequence belongs to the UPF0225 family.

The sequence is that of UPF0225 protein Pnap_0466 from Polaromonas naphthalenivorans (strain CJ2).